A 2388-amino-acid chain; its full sequence is Highly reducing polyketide synthase Preu1 (2388 aa).

A Ketosynthase family 3 (KS3) domain is found at 7 to 432; it reads NDDIAIVGLA…GTNAHVILDD (426 aa). Catalysis depends on for beta-ketoacyl synthase activity residues Cys-180, His-315, and His-355. Residues 549 to 875 form a malonyl-CoA:ACP transacylase (MAT) domain region; it reads GFVFTGQGAQ…SSVLMRGEDG (327 aa). The active-site For malonyltransferase activity is the Ser-641. The interval 940–1074 is N-terminal hotdog fold; sequence HDLLGAPTQD…GLGKIHYRPE (135 aa). Residues 940–1256 form the PKS/mFAS DH domain; that stretch reads HDLLGAPTQD…CRELPNGNSQ (317 aa). Positions 941–1251 are dehydratase (DH) domain; it reads DLLGAPTQDS…VEGLRCRELP (311 aa). Catalysis depends on His-972, which acts as the Proton acceptor; for dehydratase activity. The tract at residues 1102–1256 is C-terminal hotdog fold; it reads TASISPVDFY…CRELPNGNSQ (155 aa). Asp-1167 serves as the catalytic Proton donor; for dehydratase activity. The segment at 1676–1983 is enoyl reductase (ER) domain; sequence KLPSDARFTS…VPTGLGKAVL (308 aa). Positions 2007–2191 are ketoreductase (KR) domain; the sequence is ATYVLAGGLG…AATSVDLGLM (185 aa). Positions 2303-2380 constitute a Carrier domain; the sequence is QANGIVLEAL…ALAEKISKAS (78 aa). Ser-2340 bears the O-(pantetheine 4'-phosphoryl)serine mark.

Pantetheine 4'-phosphate is required as a cofactor.

Its function is as follows. Highly reducing polyketide synthase; part of a gene cluster that mediates the biosynthesis of a yet unidentified natural product. The chain is Highly reducing polyketide synthase Preu1 from Preussia isomera (Coprophilous fungus).